The sequence spans 118 residues: Large ribosomal subunit protein uL18 (118 aa).

Belongs to the universal ribosomal protein uL18 family. In terms of assembly, part of the 50S ribosomal subunit; part of the 5S rRNA/L5/L18/L25 subcomplex. Contacts the 5S and 23S rRNAs.

Functionally, this is one of the proteins that bind and probably mediate the attachment of the 5S RNA into the large ribosomal subunit, where it forms part of the central protuberance. In Rickettsia peacockii (strain Rustic), this protein is Large ribosomal subunit protein uL18.